Reading from the N-terminus, the 302-residue chain is Homoserine O-acetyltransferase 1 (302 aa).

Residue Cys-142 is the Acyl-thioester intermediate of the active site. Positions 163 and 192 each coordinate substrate. His-235 (proton acceptor) is an active-site residue. The active site involves Glu-237. Residue Arg-249 participates in substrate binding.

This sequence belongs to the MetA family.

It is found in the cytoplasm. The catalysed reaction is L-homoserine + acetyl-CoA = O-acetyl-L-homoserine + CoA. The protein operates within amino-acid biosynthesis; L-methionine biosynthesis via de novo pathway; O-acetyl-L-homoserine from L-homoserine: step 1/1. In terms of biological role, transfers an acetyl group from acetyl-CoA to L-homoserine, forming acetyl-L-homoserine. The polypeptide is Homoserine O-acetyltransferase 1 (Ilyobacter polytropus (strain ATCC 51220 / DSM 2926 / LMG 16218 / CuHBu1)).